A 1322-amino-acid chain; its full sequence is BRCA2-interacting transcriptional repressor EMSY (1322 aa).

The tract at residues 1–478 (MPVVWPTLLD…LPKPVTATLP (478 aa)) is interaction with BRCA2. An ENT domain is found at 16-100 (CKRILRKLEL…EWSIEGRRLV (85 aa)). Residues 104–108 (PRLVP) are interaction with ZMYND11. The segment covering 148–162 (STTSTPTSTPVPSGS) has biased composition (low complexity). Disordered stretches follow at residues 148–178 (STTS…ASNV) and 192–215 (VSCS…SSPV). Phosphothreonine is present on T207. A phosphoserine mark is found at S209 and S213. S228 and S236 each carry an O-linked (GlcNAc) serine glycan. S238 bears the Phosphoserine mark. O-linked (GlcNAc) threonine glycosylation is present at T271. The span at 417–437 (QQTQQQVAQPSPVSHQQQPQQ) shows a compositional bias: low complexity. The tract at residues 417–444 (QQTQQQVAQPSPVSHQQQPQQSPLPPGI) is disordered. O-linked (GlcNAc) threonine glycans are attached at residues T501 and T506. The O-linked (GlcNAc) serine glycan is linked to S557. The segment covering 698 to 707 (VAEAGNSSIQ) has biased composition (polar residues). Residues 698–736 (VAEAGNSSIQEGKEEPQNYTDSSSSSTESSQSSQDSQPV) are disordered. Residues 717–734 (TDSSSSSTESSQSSQDSQ) show a composition bias toward low complexity. Phosphoserine is present on residues S818 and S821. O-linked (GlcNAc) threonine glycosylation occurs at T1120. S1136 is modified (phosphoserine). Over residues 1205 to 1223 (QKCRESCSSPSTVGSSLTT) the composition is skewed to polar residues. Disordered regions lie at residues 1205 to 1231 (QKCR…PPAV) and 1290 to 1322 (QLDD…AERS). Over residues 1291–1310 (LDDEETAMEQDIDSSTEDGT) the composition is skewed to acidic residues. A compositionally biased stretch (polar residues) spans 1312–1322 (PSPSQSSAERS).

Homodimer. Interacts with the transactivation domain of BRCA2. Interacts with CBX1 (via chromoshadow domain). Interacts with ZMYND11. Does not interact with CBX3 or CBX5. Component of a nuclear receptor-mediated transcription complex composed of at least ZNF335, CCAR2 and EMSY; the complex stimulates the transcription of nuclear receptor target genes such as SOX9 and HOXA1. Within the complex interacts with CCAR2 and ZNF335. Components of this complex may associate with components of a histone methylation complex to form a complex at least composed of ZNF335, HCFC1, CCAR2, EMSY, MKI67, RBBP5, ASH2L and WDR5. Within this complex, interacts with ASH2L and RBBP5. Post-translationally, O-glycosylated during cytokinesis at sites identical or close to phosphorylation sites, this interferes with the phosphorylation status.

The protein localises to the nucleus. Functionally, regulator which is able to repress transcription, possibly via its interaction with a multiprotein chromatin remodeling complex that modifies the chromatin. Its interaction with BRCA2 suggests that it may play a central role in the DNA repair function of BRCA2. Mediates ligand-dependent transcriptional activation by nuclear hormone receptors. In Homo sapiens (Human), this protein is BRCA2-interacting transcriptional repressor EMSY.